The primary structure comprises 1259 residues: Autism susceptibility gene 2 protein (1259 aa).

Disordered regions lie at residues 1-87 (MDGP…EEDI), 108-285 (LKPQ…QDCC), 299-470 (CPQV…PPPP), 771-1027 (PNSM…MTVG), and 1119-1146 (REPH…HERG). Basic residues predominate over residues 8–17 (HGLRKKRRSR). Gly residues predominate over residues 28-41 (GGLGAGAAGGGGAG). Residues 108–118 (LKPQERVEKRQ) show a composition bias toward basic and acidic residues. Basic residues predominate over residues 136 to 147 (HSKKSRLSHPHH). A compositionally biased stretch (basic and acidic residues) spans 148 to 158 (YSSDRENDRNL). Positions 177–192 (PGQNSCRDSDSESASG) are enriched in polar residues. Residues 276–285 (RSQEKSQDCC) show a composition bias toward basic and acidic residues. The important for regulation of lamellipodia formation stretch occupies residues 289 to 472 (IFEPVVLKDP…PTALPPPPPL (184 aa)). Composition is skewed to pro residues over residues 331-345 (PPQP…PQGP) and 353-365 (APQP…PRPQ). A compositionally biased stretch (low complexity) spans 386–410 (SLSQPLSAYNSSSLSLNSLSSSRSS). The segment covering 436-447 (PNHSPLHSFTPT) has biased composition (polar residues). Residues 801 to 810 (PSFPTPPPWL) show a composition bias toward pro residues. 3 stretches are compositionally biased toward basic and acidic residues: residues 813–850 (GELE…VEKR), 876–935 (IRAH…EAKQ), and 960–993 (REAE…HDLP). Residues 1125–1134 (SHHHHHHHHP) are compositionally biased toward basic residues. S1198 and S1233 each carry phosphoserine. Positions 1217–1259 (LSAPPPLISTLGGRPVSPRRTTPLSAEIRERPPSHTLKDIEAR) are disordered. Over residues 1243–1259 (EIRERPPSHTLKDIEAR) the composition is skewed to basic and acidic residues.

Belongs to the AUTS2 family. In terms of assembly, component of a PRC1-like complex that contains PCGF5, RNF2, CSNK2B, RYBP and AUTS2. Within this complex, interacts directly with PCGF5 and CSNK2B. Interacts with the histone acetyltransferase EP300/p300. Interacts (via Pro-rich region) with PREX1, DOCK1 and ELMO2. As to expression, strongly expressed in brain, skeletal muscle and kidney. Also expressed in placenta, lung and leukocytes.

It localises to the nucleus. It is found in the cytoplasm. The protein resides in the cytoskeleton. Its subcellular location is the cell projection. The protein localises to the growth cone. Component of a Polycomb group (PcG) multiprotein PRC1-like complex, a complex class required to maintain the transcriptionally repressive state of many genes, including Hox genes, throughout development. PcG PRC1 complex acts via chromatin remodeling and modification of histones; it mediates monoubiquitination of histone H2A 'Lys-119', rendering chromatin heritably changed in its expressibility. The PRC1-like complex that contains PCGF5, RNF2, CSNK2B, RYBP and AUTS2 has decreased histone H2A ubiquitination activity, due to the phosphorylation of RNF2 by CSNK2B. As a consequence, the complex mediates transcriptional activation. In the cytoplasm, plays a role in axon and dendrite elongation and in neuronal migration during embryonic brain development. Promotes reorganization of the actin cytoskeleton, lamellipodia formation and neurite elongation via its interaction with RAC guanine nucleotide exchange factors, which then leads to the activation of RAC1. The protein is Autism susceptibility gene 2 protein (AUTS2) of Homo sapiens (Human).